The primary structure comprises 722 residues: Zinc finger protein 600 (722 aa).

The C2H2-type 1; degenerate zinc-finger motif lies at 162–184; it reads FQCNESGKAFNCSSLLRKHQIPH. 9 C2H2-type zinc fingers span residues 190–212, 218–240, 246–268, 274–296, 302–324, 330–352, 358–380, 386–408, and 414–436; these read YKCD…CRCH, YKCN…RRLH, HKCN…KAIH, YKCN…RRIH, YKCE…KRIH, YKCK…KRIH, YKCN…HRLH, YKCK…TRIH, and YKCN…KSIH. The segment at 442-464 adopts a C2H2-type 11; degenerate zinc-finger fold; sequence YKYEECEKVFSCGSTLETHKIIH. C2H2-type zinc fingers lie at residues 470 to 492, 498 to 520, 526 to 548, 554 to 576, 582 to 604, 610 to 632, 638 to 660, 666 to 688, and 694 to 716; these read YKCK…TRIH, YKCN…RRVH, YKCN…RRLH, YKCT…TRIH, YKCN…HRIH, YKCE…RRIH, YKCK…TGLH, and YKCN…QAVH.

The protein belongs to the krueppel C2H2-type zinc-finger protein family.

It localises to the nucleus. May be involved in transcriptional regulation. This chain is Zinc finger protein 600 (ZNF600), found in Homo sapiens (Human).